A 294-amino-acid chain; its full sequence is Cytidine deaminase (294 aa).

CMP/dCMP-type deaminase domains lie at 48–168 (DEDA…FGPK) and 186–294 (LTGD…VLLG). Residue 89–91 (NME) coordinates substrate. His102 lines the Zn(2+) pocket. The Proton donor role is filled by Glu104. Zn(2+)-binding residues include Cys129 and Cys132.

Belongs to the cytidine and deoxycytidylate deaminase family. In terms of assembly, homodimer. Requires Zn(2+) as cofactor.

It catalyses the reaction cytidine + H2O + H(+) = uridine + NH4(+). The enzyme catalyses 2'-deoxycytidine + H2O + H(+) = 2'-deoxyuridine + NH4(+). Functionally, this enzyme scavenges exogenous and endogenous cytidine and 2'-deoxycytidine for UMP synthesis. The sequence is that of Cytidine deaminase from Salmonella agona (strain SL483).